The sequence spans 306 residues: Tyrosine recombinase XerC (306 aa).

In terms of domain architecture, Core-binding (CB) spans 2–81; the sequence is AKASAAIEEF…ALRQFYGFLV (80 aa). Residues 102 to 283 form the Tyr recombinase domain; the sequence is PLPKTLSHKE…DAARLVALVN (182 aa). Residues R146, K170, H235, R238, and H261 contribute to the active site. Y270 functions as the O-(3'-phospho-DNA)-tyrosine intermediate in the catalytic mechanism.

This sequence belongs to the 'phage' integrase family. XerC subfamily. In terms of assembly, forms a cyclic heterotetrameric complex composed of two molecules of XerC and two molecules of XerD.

It is found in the cytoplasm. Site-specific tyrosine recombinase, which acts by catalyzing the cutting and rejoining of the recombining DNA molecules. The XerC-XerD complex is essential to convert dimers of the bacterial chromosome into monomers to permit their segregation at cell division. It also contributes to the segregational stability of plasmids. This chain is Tyrosine recombinase XerC, found in Erythrobacter litoralis (strain HTCC2594).